We begin with the raw amino-acid sequence, 1555 residues long: Regulating synaptic membrane exocytosis protein 2 (1555 aa).

The segment at 1–35 (MSAPLGPRGRPAPTPAASQPPPQPEMPDLSHLTEE) is disordered. The span at 10-25 (RPAPTPAASQPPPQPE) shows a compositional bias: pro residues. In terms of domain architecture, RabBD spans 26 to 154 (MPDLSHLTEE…TKSGAWFYNS (129 aa)). The segment at 86-142 (KGDAPTCGICHKTKFADGCGHNCSYCQTKFCARCGGRVSLRSNKVMWVCNLCRKQQE) adopts an FYVE-type zinc-finger fold. Zn(2+)-binding residues include cysteine 92, cysteine 95, cysteine 108, cysteine 111, cysteine 116, cysteine 119, cysteine 134, and cysteine 137. The segment covering 154 to 163 (SGSNTPQQPD) has biased composition (polar residues). Residues 154 to 530 (SGSNTPQQPD…STPEYTSCDD (377 aa)) are disordered. Residues 170–185 (LRSEEAPQEKKAKLHE) show a composition bias toward basic and acidic residues. The span at 259–268 (YVPSDSTMPR) shows a compositional bias: polar residues. Composition is skewed to basic and acidic residues over residues 287 to 298 (EPDHLNYRDSNR), 317 to 335 (RDEY…RYRS), 351 to 370 (EQMR…RHSD), and 379 to 403 (EDSR…RRAA). Position 369 is a phosphoserine (serine 369). Residues 418-432 (AQGQSSYPQRTTNHS) show a composition bias toward polar residues. Over residues 444-461 (DRPELRRADSLRKQHHLD) the composition is skewed to basic and acidic residues. Over residues 479–490 (RNDSLSSDQSES) the composition is skewed to polar residues. The span at 497–506 (RPHKSKKGGK) shows a compositional bias: basic residues. Positions 590–676 (DGSVPRDSGA…EPQVELVVSR (87 aa)) constitute a PDZ domain. Threonine 611 carries the post-translational modification Phosphothreonine. Positions 682–716 (PRIPDSTHAQLESSSSSFESQKMDRPSISVTSPMS) are disordered. Phosphoserine occurs at positions 713 and 716. A C2 1 domain is found at 743–866 (FVPRVQIKLW…ALLDDEPHWY (124 aa)). 5 disordered regions span residues 877-913 (PLPH…VSDY), 935-1145 (STLS…KRNS), 1180-1207 (YRSG…DVSA), 1268-1288 (LEKN…TSGK), and 1307-1332 (KSRS…QRST). Positions 935-953 (STLSVPEQVMSSNHCSPSG) are enriched in polar residues. Basic and acidic residues-rich tracts occupy residues 996–1014 (RMDR…RDSH) and 1025–1071 (QTSE…ERAD). Over residues 1092-1114 (ALSRSHPRTGSVQTSPSSTPVTG) the composition is skewed to low complexity. Serine 1106 carries the phosphoserine modification. Basic and acidic residues-rich tracts occupy residues 1128–1141 (TLER…DSTR) and 1180–1190 (YRSGWDPHRGA). Phosphoserine is present on residues serine 1200 and serine 1276. Residues 1401 to 1519 (AMGDIQVGMM…ELSNMVIGWF (119 aa)) form the C2 2 domain. Phosphoserine is present on residues serine 1540 and serine 1543.

As to quaternary structure, heterodimer with PCLO. Part of a ternary complex involving PCLO and EPAC2. Interacts with RAB3C, RAB3D and RAB26. Binds RAB3A and RAB3B that have been activated by GTP-binding. Interacts with TSPOAP1 and RIMBP2. Interacts with PPFIA3 and PPFIA4. Interacts via its zinc finger with the first C2 domain of UNC13A. Forms a complex consisting of UNC13A, RIMS2 and RAB3A. As to expression, highly expressed in hippocampus, brain cortex, cerebellum and olfactory bulb. Detected at intermediate levels in midbrain, hindbrain and spinal cord, and at low levels in testis.

The protein resides in the cell membrane. The protein localises to the synapse. Its subcellular location is the presynaptic cell membrane. Rab effector involved in exocytosis. May act as scaffold protein. Plays a role in dendrite formation by melanocytes. In Rattus norvegicus (Rat), this protein is Regulating synaptic membrane exocytosis protein 2 (Rims2).